Reading from the N-terminus, the 473-residue chain is Photosystem II CP43 reaction center protein (473 aa).

A propeptide spanning residues 1-14 (MKILYSQRRFYHVE) is cleaved from the precursor. A run of 5 helical transmembrane segments spans residues 69–93 (LFEVAHFLPEKPLYEQGCILLPHLA), 134–155 (LIGPEILEESYPFFGYDWRDKN), 178–200 (KAMFFGGVYDTWAPGGGDVRYIN), 255–275 (KPFGWARRAFVWSGEAYLSYS), and 291–312 (WYNNTAYPSEFYGPTGPEASQA). Glu-367 lines the [CaMn4O5] cluster pocket. Residues 447-471 (RARAAAAGFEKGINRENEPVLSMKL) traverse the membrane as a helical segment.

It belongs to the PsbB/PsbC family. PsbC subfamily. In terms of assembly, PSII is composed of 1 copy each of membrane proteins PsbA, PsbB, PsbC, PsbD, PsbE, PsbF, PsbH, PsbI, PsbJ, PsbK, PsbL, PsbM, PsbT, PsbY, PsbZ, Psb30/Ycf12, at least 3 peripheral proteins of the oxygen-evolving complex and a large number of cofactors. It forms dimeric complexes. It depends on Binds multiple chlorophylls and provides some of the ligands for the Ca-4Mn-5O cluster of the oxygen-evolving complex. It may also provide a ligand for a Cl- that is required for oxygen evolution. PSII binds additional chlorophylls, carotenoids and specific lipids. as a cofactor.

The protein localises to the plastid. It is found in the chloroplast thylakoid membrane. Its function is as follows. One of the components of the core complex of photosystem II (PSII). It binds chlorophyll and helps catalyze the primary light-induced photochemical processes of PSII. PSII is a light-driven water:plastoquinone oxidoreductase, using light energy to abstract electrons from H(2)O, generating O(2) and a proton gradient subsequently used for ATP formation. This is Photosystem II CP43 reaction center protein from Galdieria sulphuraria (Red alga).